We begin with the raw amino-acid sequence, 314 residues long: Methionyl-tRNA formyltransferase (314 aa).

110-113 (SLLP) is a (6S)-5,6,7,8-tetrahydrofolate binding site.

Belongs to the Fmt family.

The catalysed reaction is L-methionyl-tRNA(fMet) + (6R)-10-formyltetrahydrofolate = N-formyl-L-methionyl-tRNA(fMet) + (6S)-5,6,7,8-tetrahydrofolate + H(+). Functionally, attaches a formyl group to the free amino group of methionyl-tRNA(fMet). The formyl group appears to play a dual role in the initiator identity of N-formylmethionyl-tRNA by promoting its recognition by IF2 and preventing the misappropriation of this tRNA by the elongation apparatus. The protein is Methionyl-tRNA formyltransferase of Lactobacillus acidophilus (strain ATCC 700396 / NCK56 / N2 / NCFM).